We begin with the raw amino-acid sequence, 37 residues long: Somatostatin-37 (37 aa).

Positions 1–2 are excised as a propeptide; it reads AL. Cysteines 26 and 37 form a disulfide.

The protein belongs to the somatostatin family.

It localises to the secreted. Somatostatin inhibits the release of somatotropin. This is Somatostatin-37 (sst) from Petromyzon marinus (Sea lamprey).